A 548-amino-acid polypeptide reads, in one-letter code: Chaperonin GroEL (548 aa).

ATP is bound by residues 30 to 33 (TLGP), Lys51, 87 to 91 (DGTTT), Gly415, 479 to 481 (NAA), and Asp495.

The protein belongs to the chaperonin (HSP60) family. As to quaternary structure, forms a cylinder of 14 subunits composed of two heptameric rings stacked back-to-back. Interacts with the co-chaperonin GroES.

It localises to the cytoplasm. It catalyses the reaction ATP + H2O + a folded polypeptide = ADP + phosphate + an unfolded polypeptide.. Its function is as follows. Together with its co-chaperonin GroES, plays an essential role in assisting protein folding. The GroEL-GroES system forms a nano-cage that allows encapsulation of the non-native substrate proteins and provides a physical environment optimized to promote and accelerate protein folding. The sequence is that of Chaperonin GroEL from Vibrio campbellii (strain ATCC BAA-1116).